A 139-amino-acid polypeptide reads, in one-letter code: Putative pre-16S rRNA nuclease (139 aa).

It belongs to the YqgF nuclease family.

The protein resides in the cytoplasm. Functionally, could be a nuclease involved in processing of the 5'-end of pre-16S rRNA. This chain is Putative pre-16S rRNA nuclease, found in Streptococcus mutans serotype c (strain ATCC 700610 / UA159).